A 144-amino-acid polypeptide reads, in one-letter code: High mobility group B protein 2 (144 aa).

Basic and acidic residues-rich tracts occupy residues 1–12 (MKGAKSKTETRS) and 73–94 (AGDKWKSLSDSEKAPYVAKAEK). Disordered stretches follow at residues 1–42 (MKGA…KRPA), 57–94 (KKENPKNKSVATVGKAAGDKWKSLSDSEKAPYVAKAEK), and 106–144 (YNKKLEEGPKEDEESDKSVSEVNDEDDAEDGSEEEEDDD). The HMG box DNA-binding region spans 38-107 (PKRPASAFFV…EYEKNIKAYN (70 aa)). A Phosphoserine modification is found at Ser125. Acidic residues predominate over residues 127–144 (VNDEDDAEDGSEEEEDDD).

Belongs to the HMGB family. In terms of tissue distribution, mostly expressed in cotyledons, hypocotyls, leaves, and flowers (excluding pedicels), also present in roots and stems.

It is found in the nucleus. Its subcellular location is the cytoplasm. The protein resides in the cytosol. Its function is as follows. Binds preferentially double-stranded DNA. Confers sensitivity to salt and drought stresses. This Arabidopsis thaliana (Mouse-ear cress) protein is High mobility group B protein 2 (HMGB2).